A 116-amino-acid chain; its full sequence is Ly-6/neurotoxin-like protein 1 (116 aa).

The first 20 residues, 1–20 (MTPLLTLFLVALIGLPLAQA), serve as a signal peptide directing secretion. Residues 21 to 105 (LDCHVCAYNG…FAAPATLALA (85 aa)) enclose the UPAR/Ly6 domain. 5 cysteine pairs are disulfide-bonded: C23/C46, C26/C33, C39/C64, C68/C85, and C86/C91. N92 is lipidated: GPI-anchor amidated asparagine. Residues 93-116 (GAGFAAPATLALAPILLATLWGLL) constitute a propeptide, removed in mature form.

Interacts with nAChRs containing alpha-4:beta-2 (CHRNA4:CHRNB2) and alpha-7 (CHRNA7) subunits. Interacts with CHRNA4 probably in the endoplasmic reticulum prior to nAChR pentameric assembly. Interacts with KCNA2/Potassium voltage-gated channel subfamily A member 2.

It is found in the cell membrane. The protein localises to the cell projection. Its subcellular location is the dendrite. It localises to the endoplasmic reticulum. Acts in different tissues through interaction to nicotinic acetylcholine receptors (nAChRs). The proposed role as modulator of nAChR activity seems to be dependent on the nAChR subtype and stoichiometry, and to involve an effect on nAChR trafficking and its cell surface expression, and on single channel properties of the nAChR inserted in the plasma membrane. Modulates functional properties of nicotinic acetylcholine receptors (nAChRs) to prevent excessive excitation, and hence neurodegeneration. Enhances desensitization by increasing both the rate and extent of desensitization of alpha-4:beta-2-containing nAChRs and slowing recovery from desensitization. Promotes large amplitude ACh-evoked currents through alpha-4:beta-2 nAChRs. Is involved in regulation of the nAChR pentameric assembly in the endoplasmic reticulum. Shifts stoichiometry from high sensitivity alpha-4(2):beta-2(3) to low sensitivity alpha-4(3):beta-2(2) nAChR. In vitro modulates alpha-3:beta-4-containing nAChRs. Reduces cell surface expression of (alpha-3:beta-4)(2):beta-4 and (alpha-3:beta-4)(2):alpha-5 nAChRs suggesting an interaction with nAChR alpha-3(-):(+)beta-4 subunit interfaces and an allosteric mode. Corresponding single channel effects characterized by decreased unitary conductance, altered burst proportions and enhanced desensitization/inactivation seem to depend on nAChR alpha:alpha subunit interfaces and are greater in (alpha-3:beta-2)(2):alpha-3 when compared to (alpha-3:beta-2)(2):alpha-5 nAChRs. Prevents plasticity in the primary visual cortex late in life. In Saimiri boliviensis boliviensis (Bolivian squirrel monkey), this protein is Ly-6/neurotoxin-like protein 1.